Here is a 371-residue protein sequence, read N- to C-terminus: Peptide chain release factor 2 (371 aa).

Residue Q251 is modified to N5-methylglutamine.

The protein belongs to the prokaryotic/mitochondrial release factor family. Methylated by PrmC. Methylation increases the termination efficiency of RF2.

It is found in the cytoplasm. Peptide chain release factor 2 directs the termination of translation in response to the peptide chain termination codons UGA and UAA. The polypeptide is Peptide chain release factor 2 (Pseudarthrobacter chlorophenolicus (strain ATCC 700700 / DSM 12829 / CIP 107037 / JCM 12360 / KCTC 9906 / NCIMB 13794 / A6) (Arthrobacter chlorophenolicus)).